The following is a 1129-amino-acid chain: Phytochrome A type 3 (1129 aa).

Over residues 1 to 21 the composition is skewed to low complexity; that stretch reads MSSSRPASSSSSRNRQSSQAR. Residues 1–24 are disordered; it reads MSSSRPASSSSSRNRQSSQARVLA. One can recognise a GAF domain in the interval 217-402; that stretch reads SMEVLCNTVV…VFAVHVNREF (186 aa). Cys-322 serves as a coordination point for phytochromobilin. 2 PAS domains span residues 618–688 and 748–822; these read VTSE…LQGK and VEGD…VSLC. The Histidine kinase domain maps to 902 to 1122; that stretch reads YMRHAINNPL…TFIITAELAS (221 aa).

This sequence belongs to the phytochrome family. In terms of assembly, homodimer. Post-translationally, contains one covalently linked phytochromobilin chromophore.

Regulatory photoreceptor which exists in two forms that are reversibly interconvertible by light: the Pr form that absorbs maximally in the red region of the spectrum and the Pfr form that absorbs maximally in the far-red region. Photoconversion of Pr to Pfr induces an array of morphogenic responses, whereas reconversion of Pfr to Pr cancels the induction of those responses. Pfr controls the expression of a number of nuclear genes including those encoding the small subunit of ribulose-bisphosphate carboxylase, chlorophyll A/B binding protein, protochlorophyllide reductase, rRNA, etc. It also controls the expression of its own gene(s) in a negative feedback fashion. This Avena sativa (Oat) protein is Phytochrome A type 3 (PHYA3).